We begin with the raw amino-acid sequence, 293 residues long: MKI67 FHA domain-interacting nucleolar phosphoprotein (293 aa).

The residue at position 2 (Ala2) is an N-acetylalanine. Lys38 is covalently cross-linked (Glycyl lysine isopeptide (Lys-Gly) (interchain with G-Cter in SUMO2)). Positions 45 to 123 constitute an RRM domain; it reads GVVYVRHLPN…RLLECHFMPP (79 aa). Position 114 is an omega-N-methylarginine; by PRMT1 and PRMT8 (Arg114). A Glycyl lysine isopeptide (Lys-Gly) (interchain with G-Cter in SUMO2) cross-link involves residue Lys139. Ser145 bears the Phosphoserine mark. Glycyl lysine isopeptide (Lys-Gly) (interchain with G-Cter in SUMO2) cross-links involve residues Lys179 and Lys192. The span at 197 to 207 shows a compositional bias: polar residues; sequence SKTNRQTSTKG. A disordered region spans residues 197-239; sequence SKTNRQTSTKGQVLRKKKKKVSGTLDTPEKTVDSQGPTPVCTP. Ser218 is subject to Phosphoserine. Thr223 is subject to Phosphothreonine. Positions 226 to 269 are interaction with MKI67; the sequence is KTVDSQGPTPVCTPTFLERRKSQVAELNDDDKDDEIVFKQPISC. The residue at position 230 (Ser230) is a Phosphoserine. A phosphothreonine mark is found at Thr234 and Thr238. An omega-N-methylated arginine; by PRMT1 and PRMT8 mark is found at Arg244 and Arg245. Ser247 bears the Phosphoserine mark. Lys271 is covalently cross-linked (Glycyl lysine isopeptide (Lys-Gly) (interchain with G-Cter in SUMO1); alternate). Lys271 is covalently cross-linked (Glycyl lysine isopeptide (Lys-Gly) (interchain with G-Cter in SUMO2); alternate). A disordered region spans residues 271–293; the sequence is KEEIQETQTPTHSRKKRRRSSNQ. Thr279 is subject to Phosphothreonine. Residues 282–293 are compositionally biased toward basic residues; that stretch reads HSRKKRRRSSNQ. At Arg284 the chain carries Omega-N-methylarginine; by PRMT1 and PRMT8.

As to quaternary structure, binds to the FHA domain of MKI67; this interaction is enhanced in mitosis. In terms of processing, sequentially phosphorylated on Thr-238, Thr-234 and Ser-230. Thr-234 is phosphorylated only when Thr-238 is phosphorylated. Likewise, phosphorylation at Ser-230 requires that Thr-234 and Thr-238 are phosphorylated. Phosphorylation enhances MKI67 binding.

It localises to the nucleus. Its subcellular location is the nucleolus. The protein localises to the chromosome. In Homo sapiens (Human), this protein is MKI67 FHA domain-interacting nucleolar phosphoprotein (NIFK).